An 844-amino-acid polypeptide reads, in one-letter code: Translation initiation factor IF-2 (844 aa).

The segment covering 1–11 (MTEDVKADVPK) has biased composition (basic and acidic residues). Disordered regions lie at residues 1 to 35 (MTED…SKAV) and 79 to 248 (RLEA…KGAA). The segment covering 21–33 (TTVSGTTTSGKSK) has biased composition (low complexity). Basic and acidic residues predominate over residues 79–161 (RLEAEKAATK…AAEEAKRYAE (83 aa)). Residues 162–175 (ADDSDNESSSEDYS) are compositionally biased toward acidic residues. A compositionally biased stretch (basic residues) spans 200–210 (RGKNKVAKAKK). Residues 211–237 (GGRDDENSKNSKNERESNRKNQKDAKF) show a composition bias toward basic and acidic residues. Residues 343-513 (TRAPVVTIMG…LLQSEVLELT (171 aa)) form the tr-type G domain. The tract at residues 352–359 (GHVDHGKT) is G1. Residue 352–359 (GHVDHGKT) participates in GTP binding. The G2 stretch occupies residues 377 to 381 (GITQH). A G3 region spans residues 399-402 (DTPG). GTP-binding positions include 399-403 (DTPGH) and 453-456 (NKID). The G4 stretch occupies residues 453–456 (NKID). The tract at residues 489–491 (SAK) is G5.

It belongs to the TRAFAC class translation factor GTPase superfamily. Classic translation factor GTPase family. IF-2 subfamily.

The protein resides in the cytoplasm. Functionally, one of the essential components for the initiation of protein synthesis. Protects formylmethionyl-tRNA from spontaneous hydrolysis and promotes its binding to the 30S ribosomal subunits. Also involved in the hydrolysis of GTP during the formation of the 70S ribosomal complex. The polypeptide is Translation initiation factor IF-2 (Haemophilus influenzae (strain PittGG)).